A 335-amino-acid polypeptide reads, in one-letter code: Protein BRASSINAZOLE-RESISTANT 2 (335 aa).

A compositionally biased stretch (low complexity) spans 1 to 19; the sequence is MTSDGATSTSAAAAAAAMA. Disordered regions lie at residues 1 to 40, 85 to 122, and 164 to 190; these read MTSD…RRRR, TYRK…FDSP, and PPLR…KPLP. The required for DNA-binding stretch occupies residues 22 to 103; it reads RKPSWREREN…PGDMAGSSSR (82 aa). Residues 99–120 show a composition bias toward polar residues; it reads GSSSRATPYSSHNQSPLSSTFD. Threonine 175 bears the Phosphothreonine mark. Residues 231–251 are PEST-like; it reads HAPATIPECDESDSSTVDSGH.

It belongs to the BZR/LAT61 family. Interacts with ASK7/BIN2 through its C-terminal domain and with the bHLH transcription factors BIM1, BIM2 and BIM3 through its C- and N-terminal domains. Interacts (via N-terminus) with REF6 and ELF6. Interacts with MYB30. Interacts with IWS1. Interacts with ASHH2/SDG8. Binds to MYB56 when dephosphorylated in the nucleus of quiescent center (QC) cells. Binds to WRKY46, WRKY54 and WRKY70 to cooperatively regulate the expression of target genes. In terms of processing, phosphorylated by ASK7/BIN2. Phosphorylation increases protein degradation and/or interferes with the nuclear localization. In terms of tissue distribution, ubiquitously expressed in cotyledons, leaves, hypocotyls and roots.

Its subcellular location is the nucleus. The protein localises to the cytoplasm. In terms of biological role, positive regulator of brassinosteroid (BR) signaling. Transcription factor that activates target gene expression by binding specifically to the DNA sequence 5'-CANNTG-3'(E box) through its N-terminal domain. Can bind individually to the promoter as a homodimer or synergistically as a heterodimer with BIM1, BIM2 or BIM3. The C-terminal domain is probably involved in transcriptional activation. Recruits the transcription elongation factor IWS1 to control BR-regulated gene expression. Forms a trimeric complex with IWS1 and ASHH2/SDG8 to regulate BR-regulated gene expression. Promotes quiescent center (QC) self-renewal by cell divisions in the primary root. Binds to the E-boxes of the BRAVO promoter to repress its expression. The sequence is that of Protein BRASSINAZOLE-RESISTANT 2 from Arabidopsis thaliana (Mouse-ear cress).